We begin with the raw amino-acid sequence, 572 residues long: Sulfite reductase [NADPH] hemoprotein beta-component (572 aa).

[4Fe-4S] cluster contacts are provided by cysteine 437, cysteine 443, cysteine 482, and cysteine 486. Cysteine 486 lines the siroheme pocket.

This sequence belongs to the nitrite and sulfite reductase 4Fe-4S domain family. In terms of assembly, alpha(8)-beta(8). The alpha component is a flavoprotein, the beta component is a hemoprotein. It depends on siroheme as a cofactor. [4Fe-4S] cluster serves as cofactor.

The catalysed reaction is hydrogen sulfide + 3 NADP(+) + 3 H2O = sulfite + 3 NADPH + 4 H(+). It functions in the pathway sulfur metabolism; hydrogen sulfide biosynthesis; hydrogen sulfide from sulfite (NADPH route): step 1/1. Its function is as follows. Component of the sulfite reductase complex that catalyzes the 6-electron reduction of sulfite to sulfide. This is one of several activities required for the biosynthesis of L-cysteine from sulfate. The protein is Sulfite reductase [NADPH] hemoprotein beta-component of Staphylococcus epidermidis (strain ATCC 35984 / DSM 28319 / BCRC 17069 / CCUG 31568 / BM 3577 / RP62A).